The primary structure comprises 787 residues: Integrin beta-3 (787 aa).

The first 25 residues, 1–25 (MRAQWPGQLWAALLALGALAGVVVG), serve as a signal peptide directing secretion. The Extracellular segment spans residues 26–717 (ESNICTTRGV…EEPECPKGPD (692 aa)). Positions 29-75 (ICTTRGVNSCQQCLAVSPVCAWCSDETLSQGSPRCNLKENLLKDNCA) constitute a PSI domain. 19 cysteine pairs are disulfide-bonded: Cys-30–Cys-48, Cys-38–Cys-460, Cys-41–Cys-63, Cys-51–Cys-74, Cys-202–Cys-209, Cys-257–Cys-298, Cys-399–Cys-411, Cys-431–Cys-458, Cys-462–Cys-482, Cys-473–Cys-485, Cys-487–Cys-496, Cys-498–Cys-528, Cys-511–Cys-526, Cys-520–Cys-531, Cys-533–Cys-546, Cys-548–Cys-569, Cys-553–Cys-567, Cys-561–Cys-572, and Cys-574–Cys-583. One can recognise a VWFA domain in the interval 134–376 (DYPVDIYYLM…QLIVDAYGKI (243 aa)). Ser-146 and Ser-148 together coordinate Mg(2+). The Ca(2+) site is built by Ser-148, Asp-151, Asp-152, and Asp-183. The interval 202–209 (CYNMKNAC) is CX3CL1-binding. The tract at residues 202 to 209 (CYNMKNAC) is involved in CX3CL1-, NRG1-, FGF1- and IGF1-binding. Asn-240, Asp-242, Pro-244, Glu-245, and Asp-276 together coordinate Ca(2+). Residue Glu-245 coordinates Mg(2+). The segment at 292-312 (LPNDGHCHIGTDNHYSASTTM) is CX3CL1-binding. Asn-345 and Asn-396 each carry an N-linked (GlcNAc...) asparagine glycan. I-EGF domains are found at residues 462–497 (CQAF…SMCE), 498–547 (CSEE…KYCE), 548–584 (CDDF…YYCN), and 585–624 (CTTR…DTCE). Asn-477 carries an N-linked (GlcNAc...) asparagine glycan. N-linked (GlcNAc...) asparagine glycosylation is present at Asn-584. Intrachain disulfides connect Cys-585–Cys-608, Cys-592–Cys-606, Cys-600–Cys-611, Cys-613–Cys-623, Cys-626–Cys-629, Cys-633–Cys-680, Cys-639–Cys-660, Cys-642–Cys-656, and Cys-688–Cys-712. Asn-679 is a glycosylation site (N-linked (GlcNAc...) asparagine). A helical transmembrane segment spans residues 718 to 740 (ILVVLLSVMGAILLIGLATLLIW). The Cytoplasmic segment spans residues 741-787 (KLLITIHDRKEFAKFEEERARAKWDTANNPLYKEATSTFTNITYRGT). Thr-766 is subject to Phosphothreonine. At Tyr-772 the chain carries Phosphotyrosine. The LIR motif lies at 776–782 (TSTFTNI). Thr-778 is subject to Phosphothreonine. Tyr-784 carries the post-translational modification Phosphotyrosine.

Belongs to the integrin beta chain family. In terms of assembly, heterodimer of an alpha and a beta subunit. Beta-3 (ITGB3) associates with either alpha-IIB (ITGA2B) or alpha-V (ITGAV). Interacts with FLNB and COMP. Interacts with PDIA6 following platelet stimulation. Interacts with SYK; upon activation by ITGB3 promotes platelet adhesion. Interacts with MYO10. Interacts with DAB2. Interacts with FERMT2. Integrin ITGAV:ITGB3 interacts with FBLN5 (via N-terminus). Interacts with EMP2; regulates the levels of the heterodimer ITGA5:ITGB3 integrin expression on the plasma membrane. ITGAV:ITGB3 interacts with CCN3. ITGAV:ITGB3 and ITGA2B:ITGB3 interact with SELP (via C-type lectin domain); the interaction mediates cell-cell interaction and adhesion. ITGAV:ITGB3 interacts with AGRA2. ITGAV:ITGB3 is found in a ternary complex with CX3CR1 and CX3CL1. ITGAV:ITGB3 is found in a ternary complex with NRG1 and ERBB3. ITGAV:ITGB3 is found in a ternary complex with FGF1 and FGFR1. ITGAV:ITGB3 interacts with FGF2; it is likely that FGF2 can simultaneously bind ITGAV:ITGB3 and FGF receptors. ITGAV:ITGB3 binds to IL1B. ITGAV:ITGB3 is found in a ternary complex with IGF1 and IGF1R. ITGAV:ITGB3 interacts with IGF2. ITGAV:ITGB3 interacts with FBN1. ITGAV:ITGB3 interacts with CD9, CD81 and CD151 (via second extracellular domain). Interacts (via the allosteric site (site 2)) with CXCL12 in a CXCR4-independent manner. Interacts with MXRA8/DICAM; the interaction inhibits ITGAV:ITGB3 heterodimer formation. ITGAV:ITGB3 interacts with PTN. Forms a complex with PTPRZ1 and PTN that stimulates endothelial cell migration through ITGB3 Tyr-772 phosphorylation. ITGAV:ITGB3 interacts with SLC6A4. Interacts with SLC6A4 (via C-terminus); this interaction regulates SLC6A4 trafficking. ITGA2B:ITGB3 interacts with PPIA/CYPA; the interaction is ROS and PPIase activity-dependent and is increased in the presence of thrombin. Interacts with tensin TNS3; TNS3 also interacts with PEAK1, thus acting as an adapter molecule to bridge the association of PEAK1 with ITGB3. Interacts with TM4SF19. Post-translationally, phosphorylated on tyrosine residues in response to thrombin-induced platelet aggregation. Probably involved in outside-in signaling.

The protein localises to the cell membrane. The protein resides in the cell projection. It is found in the lamellipodium membrane. It localises to the cell junction. Its subcellular location is the focal adhesion. The protein localises to the postsynaptic cell membrane. The protein resides in the synapse. Integrin alpha-V/beta-3 (ITGAV:ITGB3) is a receptor for cytotactin, fibronectin, laminin, matrix metalloproteinase-2, osteopontin, osteomodulin, prothrombin, thrombospondin, vitronectin and von Willebrand factor. Integrin alpha-IIB/beta-3 (ITGA2B:ITGB3) is a receptor for fibronectin, fibrinogen, plasminogen, prothrombin, thrombospondin and vitronectin. Integrins alpha-IIB/beta-3 and alpha-V/beta-3 recognize the sequence R-G-D in a wide array of ligands. Integrin alpha-IIB/beta-3 recognizes the sequence H-H-L-G-G-G-A-K-Q-A-G-D-V in fibrinogen gamma chain. Following activation integrin alpha-IIB/beta-3 brings about platelet/platelet interaction through binding of soluble fibrinogen. This step leads to rapid platelet aggregation which physically plugs ruptured endothelial surfaces. Fibrinogen binding enhances SELP expression in activated platelets. ITGAV:ITGB3 binds to fractalkine (CX3CL1) and acts as its coreceptor in CX3CR1-dependent fractalkine signaling. ITGAV:ITGB3 binds to NRG1 (via EGF domain) and this binding is essential for NRG1-ERBB signaling. ITGAV:ITGB3 binds to FGF1 and this binding is essential for FGF1 signaling. ITGAV:ITGB3 binds to FGF2 and this binding is essential for FGF2 signaling. ITGAV:ITGB3 binds to IGF1 and this binding is essential for IGF1 signaling. ITGAV:ITGB3 binds to IGF2 and this binding is essential for IGF2 signaling. ITGAV:ITGB3 binds to IL1B and this binding is essential for IL1B signaling. ITGAV:ITGB3 binds to PLA2G2A via a site (site 2) which is distinct from the classical ligand-binding site (site 1) and this induces integrin conformational changes and enhanced ligand binding to site 1. ITGAV:ITGB3 acts as a receptor for fibrillin-1 (FBN1) and mediates R-G-D-dependent cell adhesion to FBN1. ITGAV:ITGB3 binds to the Lilrb4a/Gp49b receptor and enhances the Lilrb4a-mediated inhibition of mast cell activation. ITGAV:ITGB3 also suppresses marginal zone B cell antibody production through its interaction with Lilrb4a. In brain, plays a role in synaptic transmission and plasticity. Involved in the regulation of the serotonin neurotransmission, is required to localize to specific compartments within the synapse the serotonin receptor SLC6A4 and for an appropriate reuptake of serotonin. Controls excitatory synaptic strength by regulating GRIA2-containing AMPAR endocytosis, which affects AMPAR abundance and composition. ITGAV:ITGB3 act as a receptor for CD40LG. ITGAV:ITGB3 acts as a receptor for IBSP and promotes cell adhesion and migration to IBSP. In Mus musculus (Mouse), this protein is Integrin beta-3.